The primary structure comprises 841 residues: Toll-like receptor 4 (841 aa).

The N-terminal stretch at 1–23 is a signal peptide; the sequence is MIPRIRLAVATIPAMAFLSCLRS. Over 24–632 the chain is Extracellular; sequence ESWDPCVQVV…FRNATCQISE (609 aa). The cysteines at positions 29 and 40 are disulfide-linked. A glycan (N-linked (GlcNAc...) asparagine) is linked at Asn35. LRR repeat units lie at residues 55-76, 79-100, 103-124, 127-148, 151-172, 176-197, and 205-225; these read SVKI…SFSS, ELQV…AYQG, YLST…AFSG, SLQK…PIGH, TLNE…EYFS, NLEH…HLQV, and NLSL…AFNK. Asn205, Asn238, Asn282, and Asn309 each carry an N-linked (GlcNAc...) asparagine glycan. Cysteines 281 and 306 form a disulfide. LRR repeat units lie at residues 374–395, 400–422, 423–444, 448–469, 472–495, 497–518, 521–542, and 545–568; these read NLQF…SHNE, KLKH…MGLE, QLEY…SIFL, NLHY…IFAG, SLQT…FTDL, NLIL…AFHS, RLQV…PYKP, and SLRI…QHLP. Cys390 and Cys391 are disulfide-bonded. N-linked (GlcNAc...) asparagine glycosylation is present at Asn526. An N-linked (GlcNAc...) asparagine glycan is attached at Asn575. The 52-residue stretch at 579-630 folds into the LRRCT domain; that stretch reads NDFSCACEHQTFLQWVKDQKQLLVGAEQMVCTQPLEMQDLPVLSFRNATCQI. 2 disulfide bridges follow: Cys583/Cys609 and Cys585/Cys628. Asn625 carries an N-linked (GlcNAc...) asparagine glycan. The helical transmembrane segment at 633 to 653 threads the bilayer; it reads AVISASVLTFLLVSVAGILVY. The Cytoplasmic segment spans residues 654-841; the sequence is KFYFHLLLFV…SNQHDTTAFT (188 aa). In terms of domain architecture, TIR spans 673–816; sequence STYDAFVIYS…IFWRRLKKAL (144 aa).

The protein belongs to the Toll-like receptor family. As to quaternary structure, belongs to the lipopolysaccharide (LPS) receptor, a multi-protein complex containing at least CD14, LY96 and TLR4. Binding to bacterial LPS leads to homodimerization. Interacts with LY96 via the extracellular domain. Interacts with MYD88 and TIRAP via their respective TIR domains. Interacts with NOX4. Interacts with CNPY3 and HSP90B1; this interaction is required for proper folding in the endoplasmic reticulum. Interacts with MAP3K21; this interaction leads to negative regulation of TLR4 signaling. Interacts with CD36, following CD36 stimulation by oxLDL or amyloid-beta 42, and forms a heterodimer with TLR6. The trimeric complex is internalized and triggers inflammatory response. LYN kinase activity facilitates TLR4-TLR6 heterodimerization and signal initiation. Interacts with TICAM1 in response to LPS in a WDFY1-dependent manner. Interacts with WDFY1 in response to LPS. Interacts with SMPDL3B. Interacts with CEACAM1; upon lipopolysaccharide stimulation, forms a complex including TLR4 and the phosphorylated form of SYK and CEACAM1, which in turn, recruits PTPN6 that dephosphorylates SYK, reducing the production of reactive oxygen species (ROS) and lysosome disruption, which in turn, reduces the activity of the inflammasome. Interacts with RFTN1; the interaction occurs in response to lipopolysaccharide stimulation. Interacts with SCIMP; the interaction occurs in response to lipopolysaccharide stimulation and is enhanced by phosphorylation of SCIMP by LYN. This interaction facilitates the phosphorylation of TLR4 by LYN which elicits a selective cytokine response in macrophages. Interacts with TRAF3IP3. Interacts with TREM1; this interaction enhances TLR4-mediated inflammatory response. Interacts with ZG16B/PAUF. Interacts with CD82; this interaction inhibits TLR4-mediated signaling pathway. Phosphorylated on tyrosine residues by LYN after binding lipopolysaccharide. Post-translationally, ubiquitinated by RNF128 via 'Lys-28'-linked polyubiquitin chains, leading to proteasomal degradation.

It localises to the cell membrane. Its subcellular location is the early endosome. It is found in the cell projection. The protein resides in the ruffle. Functionally, transmembrane receptor that functions as a pattern recognition receptor recognizing pathogen- and damage-associated molecular patterns (PAMPs and DAMPs) to induce innate immune responses via downstream signaling pathways. At the plasma membrane, cooperates with LY96 to mediate the innate immune response to bacterial lipopolysaccharide (LPS). Also involved in LPS-independent inflammatory responses triggered by free fatty acids, such as palmitate, and Ni(2+). Mechanistically, acts via MYD88, TIRAP and TRAF6, leading to NF-kappa-B activation, cytokine secretion and the inflammatory response. Alternatively, CD14-mediated TLR4 internalization via endocytosis is associated with the initiation of a MYD88-independent signaling via the TICAM1-TBK1-IRF3 axis leading to type I interferon production. In addition to the secretion of proinflammatory cytokines, initiates the activation of NLRP3 inflammasome and formation of a positive feedback loop between autophagy and NF-kappa-B signaling cascade. In complex with TLR6, promotes inflammation in monocytes/macrophages by associating with TLR6 and the receptor CD86. Upon ligand binding, such as oxLDL or amyloid-beta 42, the TLR4:TLR6 complex is internalized and triggers inflammatory response, leading to NF-kappa-B-dependent production of CXCL1, CXCL2 and CCL9 cytokines, via MYD88 signaling pathway, and CCL5 cytokine, via TICAM1 signaling pathway. In myeloid dendritic cells, vesicular stomatitis virus glycoprotein G but not LPS promotes the activation of IRF7, leading to type I IFN production in a CD14-dependent manner. This Sus scrofa (Pig) protein is Toll-like receptor 4 (TLR4).